Consider the following 661-residue polypeptide: Acyl-coenzyme A oxidase acox-1.2 (661 aa).

FAD contacts are provided by residues 147–150, 155–156, and glycine 189; these read YAQT and GS. Substrate is bound by residues 283–286 and arginine 293; that span reads KIGY. FAD is bound by residues arginine 318 and 338 to 341; that span reads QQHR. Residues histidine 340, serine 390, histidine 394, and glutamine 402 each contribute to the ATP site. Position 409 (glycine 409) interacts with FAD. Substrate is bound at residue 431-432; that stretch reads YE. The Proton acceptor role is filled by glutamate 432. Glutamate 434 serves as a coordination point for FAD. ATP-binding positions include 525-528 and tyrosine 573; that span reads RASR. The Microbody targeting signal signature appears at 659 to 661; the sequence is AKL.

The protein belongs to the acyl-CoA oxidase family. As to quaternary structure, homodimer. Forms a heterodimer with acox-1.1. It depends on FAD as a cofactor.

Its subcellular location is the peroxisome. The catalysed reaction is asc-omegaC5-CoA + O2 = asc-omegaDeltaC5-CoA + H2O2. The protein operates within lipid metabolism; peroxisomal fatty acid beta-oxidation. Its activity is regulated as follows. Activated by ATP. ATP binding leads to a conformational change that promotes FAD cofactor binding and enzyme activity. ATP binding likely occurs during acox-1.2 folding and/or dimer formation. The preference for processing substrates with shorter fatty acid chains is likely due to the closed conformation of the active site. In terms of biological role, involved in the first step of peroxisomal beta-oxidation by catalyzing the desaturation of fatty acid-derived side chains of ascaroside pheromones, which regulates development and behavior. Specifically, shortens ascarosides with 5-carbon omega side chain (asc-omega-C5). Does not shorten indol-3-carbonyl(IC)-ascaroside with 7-carbon or 9-carbon side chains. Does not catalyze the desaturation of fatty acids or hydroxylated fatty acids. The polypeptide is Acyl-coenzyme A oxidase acox-1.2 (Caenorhabditis elegans).